The sequence spans 744 residues: 3-isopropylmalate dehydratase (744 aa).

The [4Fe-4S] cluster site is built by Cys341, Cys401, and Cys404.

Belongs to the aconitase/IPM isomerase family. As to quaternary structure, monomer. Requires [4Fe-4S] cluster as cofactor.

The enzyme catalyses (2R,3S)-3-isopropylmalate = (2S)-2-isopropylmalate. The protein operates within amino-acid biosynthesis; L-leucine biosynthesis; L-leucine from 3-methyl-2-oxobutanoate: step 2/4. Functionally, catalyzes the isomerization between 2-isopropylmalate and 3-isopropylmalate, via the formation of 2-isopropylmaleate. The polypeptide is 3-isopropylmalate dehydratase (leu1) (Phycomyces blakesleeanus (strain ATCC 8743b / DSM 1359 / FGSC 10004 / NBRC 33097 / NRRL 1555)).